Consider the following 127-residue polypeptide: uncharacterized protein (127 aa).

Positions 1-17 (MQGSVQIQKGNISSSYT) are enriched in polar residues. Positions 1–36 (MQGSVQIQKGNISSSYTPEKHPSHPTSANGSMSPKR) are disordered.

This is an uncharacterized protein from Treponema pallidum (strain Nichols).